Here is a 475-residue protein sequence, read N- to C-terminus: Ribulose bisphosphate carboxylase large chain (475 aa).

A propeptide spanning residues Met-1–Ser-2 is cleaved from the precursor. The residue at position 3 (Pro-3) is an N-acetylproline. At Lys-14 the chain carries N6,N6,N6-trimethyllysine. Substrate is bound by residues Asn-123 and Thr-173. The active-site Proton acceptor is Lys-175. Substrate is bound at residue Lys-177. 3 residues coordinate Mg(2+): Lys-201, Asp-203, and Glu-204. Position 201 is an N6-carboxylysine (Lys-201). The Proton acceptor role is filled by His-294. Residues Arg-295, His-327, and Ser-379 each coordinate substrate.

This sequence belongs to the RuBisCO large chain family. Type I subfamily. In terms of assembly, heterohexadecamer of 8 large chains and 8 small chains; disulfide-linked. The disulfide link is formed within the large subunit homodimers. Mg(2+) is required as a cofactor. The disulfide bond which can form in the large chain dimeric partners within the hexadecamer appears to be associated with oxidative stress and protein turnover.

The protein resides in the plastid. It is found in the chloroplast. It catalyses the reaction 2 (2R)-3-phosphoglycerate + 2 H(+) = D-ribulose 1,5-bisphosphate + CO2 + H2O. The catalysed reaction is D-ribulose 1,5-bisphosphate + O2 = 2-phosphoglycolate + (2R)-3-phosphoglycerate + 2 H(+). Its function is as follows. RuBisCO catalyzes two reactions: the carboxylation of D-ribulose 1,5-bisphosphate, the primary event in carbon dioxide fixation, as well as the oxidative fragmentation of the pentose substrate in the photorespiration process. Both reactions occur simultaneously and in competition at the same active site. The protein is Ribulose bisphosphate carboxylase large chain of Psilotum nudum (Whisk fern).